Here is a 103-residue protein sequence, read N- to C-terminus: Co-chaperonin GroES (103 aa).

This sequence belongs to the GroES chaperonin family. As to quaternary structure, heptamer of 7 subunits arranged in a ring. Interacts with the chaperonin GroEL.

The protein localises to the cytoplasm. Its function is as follows. Together with the chaperonin GroEL, plays an essential role in assisting protein folding. The GroEL-GroES system forms a nano-cage that allows encapsulation of the non-native substrate proteins and provides a physical environment optimized to promote and accelerate protein folding. GroES binds to the apical surface of the GroEL ring, thereby capping the opening of the GroEL channel. The protein is Co-chaperonin GroES of Synechococcus sp. (strain WH7803).